Here is a 95-residue protein sequence, read N- to C-terminus: Hiracin-JM79 immunity factor (95 aa).

In terms of biological role, imparts immunity to bacteriocin hiracin-JM79 to naturally sensitive host strains. In Enterococcus hirae, this protein is Hiracin-JM79 immunity factor.